We begin with the raw amino-acid sequence, 166 residues long: MGDIRKHRKKYERPYKPWDRRVLEETNRLAGYYGLRNKRELWRMSFLAKKYRRIARQLLAAPKSESWKVEPIIKKLQALGILSKDATLDDLLDLSVEQFLERRLQTIVWRKGFAKSPYMARQLITHGHIRVNGRRIRQPSYLVKIEEEDKIECLHPSCLEVEKEVR.

Residues 102 to 164 (RRLQTIVWRK…HPSCLEVEKE (63 aa)) enclose the S4 RNA-binding domain.

This sequence belongs to the universal ribosomal protein uS4 family. Part of the 30S ribosomal subunit. Contacts protein S5. The interaction surface between S4 and S5 is involved in control of translational fidelity.

Functionally, one of the primary rRNA binding proteins, it binds directly to 16S rRNA where it nucleates assembly of the body of the 30S subunit. In terms of biological role, with S5 and S12 plays an important role in translational accuracy. This Korarchaeum cryptofilum (strain OPF8) protein is Small ribosomal subunit protein uS4.